We begin with the raw amino-acid sequence, 528 residues long: MGPEEVMVQASSPGLISATEVLVAAATFCLLLLLTQTRRQHAPKGLRSPPGPRGLPMLGSVLELRKDPHLVLTRLSRKYGDVMEVTIGSRPVVVLSGLETIKQALVRQAEDFMGRPDLYSFRHITDGQSLTFSTDTGEMWKARRKLAQNALKNFSIAASPTASSSCLLEEHVSTEASYLVTKFLQLMEEKQSFDPYRYMVVSVANVICAICFGKRYDHDDQELLSVVNVVDEFVDVTAAGNPADFIPLLRYLPSRNMDSFLDFNKRFMKLLQTAVEEHYQTFDKNNIRDVTDSLIEQCVEKKAEANGATQIPNEKIINLVNDIFGAGFDTVTTALSWSLMYLVTYPHMQKKIQAELDQTIGRERRPRLSDRGMLPYTEAFILEMFRHSSFMPFTIPHSTTRDTVLNGYYIPKDRCVFINQWQVNHDEKLWKDPQAFNPERFLNAEGTEVNKVDAEKVMTFGLGKRRCIGENIGKWEVFLFLSTLLQQLEFSIQDGKKADMTPIYGLSMKHKRCEHFQVKKRFSMKSSN.

Cys467 lines the heme pocket.

This sequence belongs to the cytochrome P450 family. It depends on heme as a cofactor.

It localises to the endoplasmic reticulum membrane. It is found in the microsome membrane. The catalysed reaction is an organic molecule + reduced [NADPH--hemoprotein reductase] + O2 = an alcohol + oxidized [NADPH--hemoprotein reductase] + H2O + H(+). In terms of biological role, cytochromes P450 are a group of heme-thiolate monooxygenases. In liver microsomes, this enzyme is involved in an NADPH-dependent electron transport pathway. It oxidizes a variety of structurally unrelated compounds, including steroids, fatty acids, and xenobiotics. The polypeptide is Cytochrome P450 1A5 (CYP1A5) (Gallus gallus (Chicken)).